We begin with the raw amino-acid sequence, 1372 residues long: DNA-directed RNA polymerase subunit beta (1372 aa).

This sequence belongs to the RNA polymerase beta chain family. In terms of assembly, the RNAP catalytic core consists of 2 alpha, 1 beta, 1 beta' and 1 omega subunit. When a sigma factor is associated with the core the holoenzyme is formed, which can initiate transcription.

The enzyme catalyses RNA(n) + a ribonucleoside 5'-triphosphate = RNA(n+1) + diphosphate. In terms of biological role, DNA-dependent RNA polymerase catalyzes the transcription of DNA into RNA using the four ribonucleoside triphosphates as substrates. This Psychrobacter cryohalolentis (strain ATCC BAA-1226 / DSM 17306 / VKM B-2378 / K5) protein is DNA-directed RNA polymerase subunit beta.